Consider the following 129-residue polypeptide: Putative pre-16S rRNA nuclease (129 aa).

This sequence belongs to the YqgF nuclease family.

Its subcellular location is the cytoplasm. Could be a nuclease involved in processing of the 5'-end of pre-16S rRNA. The sequence is that of Putative pre-16S rRNA nuclease from Campylobacter jejuni subsp. doylei (strain ATCC BAA-1458 / RM4099 / 269.97).